The chain runs to 205 residues: Large ribosomal subunit protein uL18 (205 aa).

Belongs to the universal ribosomal protein uL18 family. Part of the 50S ribosomal subunit. Contacts the 5S and 23S rRNAs.

Its function is as follows. This is one of the proteins that bind and probably mediate the attachment of the 5S RNA into the large ribosomal subunit, where it forms part of the central protuberance. The protein is Large ribosomal subunit protein uL18 of Pyrobaculum aerophilum (strain ATCC 51768 / DSM 7523 / JCM 9630 / CIP 104966 / NBRC 100827 / IM2).